A 355-amino-acid polypeptide reads, in one-letter code: Probable low-specificity L-threonine aldolase 2 (355 aa).

K211 carries the N6-(pyridoxal phosphate)lysine modification.

The protein belongs to the threonine aldolase family. The cofactor is pyridoxal 5'-phosphate. As to expression, expressed in roots, leaf vasculature and flowers.

The catalysed reaction is L-threonine = acetaldehyde + glycine. The enzyme catalyses L-allo-threonine = acetaldehyde + glycine. It participates in amino-acid degradation; L-threonine degradation via aldolase pathway; acetaldehyde and glycine from L-threonine: step 1/1. Its function is as follows. Threonine aldolase involved in threonine degradation to glycine. May play a role in the removal of L-allo-threonine. The chain is Probable low-specificity L-threonine aldolase 2 (THA2) from Arabidopsis thaliana (Mouse-ear cress).